We begin with the raw amino-acid sequence, 1313 residues long: Ataxin-2 (1313 aa).

The span at 1–12 (MRSAAAAPRSPA) shows a compositional bias: low complexity. Positions 1–255 (MRSAAAAPRS…RNSNKGLPQS (255 aa)) are disordered. A compositionally biased stretch (pro residues) spans 48–65 (GPYPSAAPPPPGPGPPPS). Composition is skewed to low complexity over residues 104 to 114 (FVVLLLPLASP), 141 to 154 (ARPA…ACEP), 166 to 187 (QQQQ…QQQQ), and 204 to 234 (LLAS…VAAT). Gly residues predominate over residues 235-244 (SGGGRPGLGR). Ser-248 carries the post-translational modification Phosphoserine. Residues 267 to 344 (RMVHILTSVV…FVVVQFKDMD (78 aa)) enclose the Sm domain. 5 positions are modified to phosphoserine: Ser-393, Ser-466, Ser-478, Ser-508, and Ser-554. 2 stretches are compositionally biased toward basic and acidic residues: residues 459-471 (ALEN…EEKY) and 478-492 (SSER…RENK). 2 disordered regions span residues 459–954 (ALEN…HQQP) and 1137–1219 (NATL…NSFP). Residues 508–544 (SGRQNSPRMGQPGSGSMPSRSTSHTSDFNPNSGSDQR) show a composition bias toward polar residues. Residues 552–562 (WPSPCPSPSSR) are compositionally biased toward pro residues. Residues 563–581 (PPSRYQSGPNSLPPRAATP) are compositionally biased toward low complexity. The span at 582 to 598 (TRPPSRPPSRPSRPPSH) shows a compositional bias: pro residues. Residue Ser-624 is modified to Phosphoserine. Residues 627–637 (AQRHPRNHRVS) are compositionally biased toward basic residues. An Asymmetric dimethylarginine; alternate modification is found at Arg-640. Arg-640 carries the post-translational modification Omega-N-methylarginine; alternate. Residue Ser-642 is modified to Phosphoserine. Positions 666–681 (TSPSGGTWSSVVSGVP) are enriched in low complexity. Position 684 is a phosphoserine (Ser-684). Positions 693–703 (PRQNSIGNTPS) are enriched in polar residues. At Ser-728 the chain carries Phosphoserine. Thr-741 carries the phosphothreonine modification. Polar residues predominate over residues 768-777 (PNETSPSFSK). Residues Ser-772 and Ser-784 each carry the phosphoserine modification. The span at 788-804 (SEHRKQIDDLKKFKNDF) shows a compositional bias: basic and acidic residues. A compositionally biased stretch (polar residues) spans 807-820 (QPSSTSESMDQLLN). Residues 821–844 (KNREGEKSRDLIKDKIEPSAKDSF) show a composition bias toward basic and acidic residues. Residues 847 to 871 (NSSSNCTSGSSKPNSPSISPSILSN) are compositionally biased toward low complexity. Phosphoserine occurs at positions 856, 857, 861, 865, 867, 888, and 889. Polar residues predominate over residues 880 to 891 (VTSQGVQTSSPA). A Glycyl lysine isopeptide (Lys-Gly) (interchain with G-Cter in SUMO2) cross-link involves residue Lys-893. The span at 893-910 (KQEKDDKEEKKDAAEQVR) shows a compositional bias: basic and acidic residues. 2 stretches are compositionally biased toward low complexity: residues 925 to 936 (SFSQPKPSTTPT) and 1155 to 1192 (GQQQ…QQSA). The span at 1206–1219 (TPASNTQSPQNSFP) shows a compositional bias: polar residues.

This sequence belongs to the ataxin-2 family. Monomer. Can also form homodimers. Interacts with TARDBP; the interaction is RNA-dependent. Interacts with RBFOX1. Interacts with polyribosomes. Interacts with SH3GL2 and SH3GL3. Interacts with SH3KBP1 and CBL. Interacts with EGFR. Interacts with ATXN2L. As to expression, expressed in the brain, heart, liver, skeletal muscle, pancreas and placenta. Isoform 1 is predominant in the brain and spinal cord. Isoform 4 is more abundant in the cerebellum. In the brain, broadly expressed in the amygdala, caudate nucleus, corpus callosum, hippocampus, hypothalamus, substantia nigra, subthalamic nucleus and thalamus.

It is found in the cytoplasm. Involved in EGFR trafficking, acting as negative regulator of endocytic EGFR internalization at the plasma membrane. This Homo sapiens (Human) protein is Ataxin-2 (ATXN2).